A 267-amino-acid polypeptide reads, in one-letter code: Glutamate racemase (267 aa).

Substrate-binding positions include 9 to 10 and 41 to 42; these read DS and YS. Cys73 acts as the Proton donor/acceptor in catalysis. Residue 74–75 participates in substrate binding; it reads NT. The active-site Proton donor/acceptor is the Cys184. 185–186 serves as a coordination point for substrate; the sequence is TH.

It belongs to the aspartate/glutamate racemases family.

The catalysed reaction is L-glutamate = D-glutamate. It functions in the pathway cell wall biogenesis; peptidoglycan biosynthesis. In terms of biological role, provides the (R)-glutamate required for cell wall biosynthesis. The sequence is that of Glutamate racemase from Glaesserella parasuis serovar 5 (strain SH0165) (Haemophilus parasuis).